The chain runs to 84 residues: Toxin Cll9 (84 aa).

The first 19 residues, Met-1–Ala-19, serve as a signal peptide directing secretion. An LCN-type CS-alpha/beta domain is found at Glu-20–Lys-83. Intrachain disulfides connect Cys-31–Cys-82, Cys-35–Cys-58, Cys-44–Cys-63, and Cys-48–Cys-65.

Expressed by the venom gland.

The protein resides in the secreted. Beta toxins bind voltage-independently at site-4 of sodium channels (Nav) and shift the voltage of activation toward more negative potentials thereby affecting sodium channel activation and promoting spontaneous and repetitive firing. Has some action on peripheral ganglia, but not on other sodium channels such as those from cerebellum granular cells in culture. Induces sleep, suggesting a strong antiepileptic action. The polypeptide is Toxin Cll9 (Centruroides limpidus (Mexican scorpion)).